We begin with the raw amino-acid sequence, 631 residues long: MLPVDGEERKSEGSDTEGDRTSPCAVSSATLKDLEVGGSGRRCSDPAGQPSNLLPQRGLGAPLPAETAHTQPSPNDRSLYLSPKSSSASSSLHARQSPCQEQAAVLNSRSIKISRLNDTIKSLKQQKKQVEHQLEEEKKANNEKQKAERELEGQIQRLNTEKKKLNTDLYHMKHSLRYFEEESKDLAGRLQRSSQRIGELEWSLCAVAATQKKKPDGFSSRSKALLKRQLEQSIREQILLKGHVTQLKESLKEVQLERDQYAEQIKGERAQWQQRMRKMSQEVCTLKEEKKHDTHRVEELERSLSRLKNQMAEPLPPDAPAVSSEVELQDLRKELERVAGELQAQVENNQCISLLNRGQKERLREQEERLQEQQERLREREKRLQQLAEPQSDLEELKHENKSALQLEQQVKELQEKLGQVMETLTSAEKEPEAAVPASGTGGESSGLMDLLEEKADLREHVEKLELGFIQYRRERCHQKVHRLLTEPGDSAKDASPGGGHHQAGPGQGGEEGEAAGAAGDGVAACGSYSEGHGKFLAAARNPAAEPSPGAPAPQELGAADKHGDLCEASLTNSVEPAQGEAREGSSQDNPTAQPVVQLLGEMQDHQEHPGLGSNCCVPCFCWAWLPRRRR.

Over residues 1 to 20 the composition is skewed to basic and acidic residues; it reads MLPVDGEERKSEGSDTEGDR. Disordered stretches follow at residues 1-103, 127-154, 426-447, and 488-520; these read MLPV…QEQA, KKQVEHQLEEEKKANNEKQKAERELEGQ, TSAEKEPEAAVPASGTGGESSG, and PGDSAKDASPGGGHHQAGPGQGGEEGEAAGAAG. Positions 78 to 92 are enriched in low complexity; it reads SLYLSPKSSSASSSL. Residues 93 to 103 show a composition bias toward polar residues; that stretch reads HARQSPCQEQA. Positions 110–468 form a coiled coil; sequence SIKISRLNDT…REHVEKLELG (359 aa). Residues 128 to 152 are compositionally biased toward basic and acidic residues; the sequence is KQVEHQLEEEKKANNEKQKAERELE. Over residues 497-510 the composition is skewed to gly residues; that stretch reads PGGGHHQAGPGQGG. The tract at residues 519–631 is golgi-targeting domain; sequence AGDGVAACGS…CWAWLPRRRR (113 aa).

Belongs to the GOLGA8 family.

It localises to the golgi apparatus. Its subcellular location is the golgi stack membrane. In terms of biological role, may be involved in maintaining Golgi structure. The sequence is that of Golgin subfamily A member 8A (GOLGA8A) from Homo sapiens (Human).